We begin with the raw amino-acid sequence, 166 residues long: 6,7-dimethyl-8-ribityllumazine synthase (166 aa).

5-amino-6-(D-ribitylamino)uracil contacts are provided by residues Trp31, 63–65, and 85–87; these read SFE and VII. 90 to 91 provides a ligand contact to (2S)-2-hydroxy-3-oxobutyl phosphate; the sequence is GT. His93 acts as the Proton donor in catalysis. Residue Phe118 participates in 5-amino-6-(D-ribitylamino)uracil binding. Arg132 is a binding site for (2S)-2-hydroxy-3-oxobutyl phosphate.

This sequence belongs to the DMRL synthase family.

It catalyses the reaction (2S)-2-hydroxy-3-oxobutyl phosphate + 5-amino-6-(D-ribitylamino)uracil = 6,7-dimethyl-8-(1-D-ribityl)lumazine + phosphate + 2 H2O + H(+). The protein operates within cofactor biosynthesis; riboflavin biosynthesis; riboflavin from 2-hydroxy-3-oxobutyl phosphate and 5-amino-6-(D-ribitylamino)uracil: step 1/2. Its function is as follows. Catalyzes the formation of 6,7-dimethyl-8-ribityllumazine by condensation of 5-amino-6-(D-ribitylamino)uracil with 3,4-dihydroxy-2-butanone 4-phosphate. This is the penultimate step in the biosynthesis of riboflavin. This chain is 6,7-dimethyl-8-ribityllumazine synthase, found in Cutibacterium acnes (strain DSM 16379 / KPA171202) (Propionibacterium acnes).